The following is a 200-amino-acid chain: MKIGIIAYQGSFEEHYLQLKRAFDKLSINGEITPVKIPKDLKDIDGVIIPGGESTTIGLVAKRLGILDELKEKITSGLPVMGTCAGAIMLAKEVSDAKVGKTSQPLIGAMNISIIRNYYGRQRESFEAIIDLSKIGKGKANVVFIRAPAITKLWGKAQSLAELNGVTVLAEENNILATTFHPELSDTTSIHEYFLHLVKG.

L-glutamine is bound at residue 52–54 (GES). Cysteine 84 (nucleophile) is an active-site residue. L-glutamine-binding positions include arginine 116 and 145–146 (IR). Residues histidine 181 and glutamate 183 each act as charge relay system in the active site.

Belongs to the glutaminase PdxT/SNO family. In terms of assembly, in the presence of PdxS, forms a dodecamer of heterodimers. Only shows activity in the heterodimer.

The catalysed reaction is aldehydo-D-ribose 5-phosphate + D-glyceraldehyde 3-phosphate + L-glutamine = pyridoxal 5'-phosphate + L-glutamate + phosphate + 3 H2O + H(+). The enzyme catalyses L-glutamine + H2O = L-glutamate + NH4(+). Its pathway is cofactor biosynthesis; pyridoxal 5'-phosphate biosynthesis. In terms of biological role, catalyzes the hydrolysis of glutamine to glutamate and ammonia as part of the biosynthesis of pyridoxal 5'-phosphate. The resulting ammonia molecule is channeled to the active site of PdxS. This Saccharolobus islandicus (strain M.16.27) (Sulfolobus islandicus) protein is Pyridoxal 5'-phosphate synthase subunit PdxT.